We begin with the raw amino-acid sequence, 255 residues long: Placenta-expressed transcript 1 protein (255 aa).

The first 26 residues, 1–26, serve as a signal peptide directing secretion; that stretch reads MPALRTLLPHLGLFLCLALCFSPSFS. N57, N67, and N126 each carry an N-linked (GlcNAc...) asparagine glycan. S236 carries GPI-anchor amidated serine lipidation. The propeptide at 237 to 255 is removed in mature form; the sequence is PLAGALHILLVFLISKLLF.

In terms of processing, N-glycosylated. GPI-anchored.

Its subcellular location is the apical cell membrane. Modulates leading keratinocyte migration and cellular adhesion to matrix proteins during a wound-healing response and promotes wound repair. May play a role during trichilemmal differentiation of the hair follicle. The chain is Placenta-expressed transcript 1 protein (Plet1) from Rattus norvegicus (Rat).